The chain runs to 414 residues: Gamma-glutamyl phosphate reductase (414 aa).

Belongs to the gamma-glutamyl phosphate reductase family.

It localises to the cytoplasm. The enzyme catalyses L-glutamate 5-semialdehyde + phosphate + NADP(+) = L-glutamyl 5-phosphate + NADPH + H(+). Its pathway is amino-acid biosynthesis; L-proline biosynthesis; L-glutamate 5-semialdehyde from L-glutamate: step 2/2. In terms of biological role, catalyzes the NADPH-dependent reduction of L-glutamate 5-phosphate into L-glutamate 5-semialdehyde and phosphate. The product spontaneously undergoes cyclization to form 1-pyrroline-5-carboxylate. The protein is Gamma-glutamyl phosphate reductase of Xanthomonas campestris pv. campestris (strain B100).